Reading from the N-terminus, the 285-residue chain is HTH-type transcriptional regulator MurR (285 aa).

The 77-residue stretch at 1–77 (MLYLTKISNA…MALIGEYSAS (77 aa)) folds into the HTH rpiR-type domain. The H-T-H motif DNA-binding region spans 37-56 (SRQMAKQLGISQSSIVKFAQ). Residues 128–268 (IIEVISKAPF…FVGLVQLNDV (141 aa)) form the SIS domain.

As to quaternary structure, homotetramer.

It participates in amino-sugar metabolism; N-acetylmuramate degradation [regulation]. Its function is as follows. Represses the expression of the murPQ operon involved in the uptake and degradation of N-acetylmuramic acid (MurNAc). Binds to two adjacent inverted repeats within the operator region. MurNAc 6-phosphate, the substrate of MurQ, is the specific inducer that weakens binding of MurR to the operator. The protein is HTH-type transcriptional regulator MurR of Escherichia coli O139:H28 (strain E24377A / ETEC).